Here is a 306-residue protein sequence, read N- to C-terminus: MQPPGDDAAPRCPFAGAHAPDAPHVPEAAGDDAQAGWHRAQLDFSQSMSYGDYLSLDPILDAQHPRSPDHNEMLFIIQHQTSELWMKLALYELRAALASIRDDALPPAFKMLARVSRVLEQLVQAWNVLATMTPSEYSAMRPYLGASSGFQSYQYRELEFILGNKNAQMLRPHAHRPAIHAHLEASLQAPSLYDEVIRLLARRGFPIAAERLDADWTQPTRHDRTVEAAWLAVYREPNAHWELYEMAEELVDLEDAFRQWRFRHVTTVERIIGFKQGTGGTSGAPYLRKMLDVVLFPELWHVRTTL.

Residues 1–33 form a disordered region; sequence MQPPGDDAAPRCPFAGAHAPDAPHVPEAAGDDA. Residues 75 to 79, Tyr-137, and Arg-141 contribute to the substrate site; that span reads FIIQH. His-264 provides a ligand contact to heme. Thr-278 lines the substrate pocket.

Belongs to the tryptophan 2,3-dioxygenase family. Homotetramer. It depends on heme as a cofactor.

It catalyses the reaction L-tryptophan + O2 = N-formyl-L-kynurenine. It participates in amino-acid degradation; L-tryptophan degradation via kynurenine pathway; L-kynurenine from L-tryptophan: step 1/2. In terms of biological role, heme-dependent dioxygenase that catalyzes the oxidative cleavage of the L-tryptophan (L-Trp) pyrrole ring and converts L-tryptophan to N-formyl-L-kynurenine. Catalyzes the oxidative cleavage of the indole moiety. This chain is Tryptophan 2,3-dioxygenase, found in Burkholderia pseudomallei (strain 668).